Reading from the N-terminus, the 114-residue chain is MNMRAERVGEQMKQEIMDIANNKVKDPRIGFLTITDVQLTNDLSIATVYLTVLGNEKQKADTFKGLEKAKGFIKSELGSRMRLRIIPELNFEYDESIDYGNKIERMIQDLHKKD.

The protein belongs to the RbfA family. Monomer. Binds 30S ribosomal subunits, but not 50S ribosomal subunits or 70S ribosomes.

The protein resides in the cytoplasm. Its function is as follows. One of several proteins that assist in the late maturation steps of the functional core of the 30S ribosomal subunit. Associates with free 30S ribosomal subunits (but not with 30S subunits that are part of 70S ribosomes or polysomes). Required for efficient processing of 16S rRNA. May interact with the 5'-terminal helix region of 16S rRNA. The polypeptide is Ribosome-binding factor A (Staphylococcus saprophyticus subsp. saprophyticus (strain ATCC 15305 / DSM 20229 / NCIMB 8711 / NCTC 7292 / S-41)).